The chain runs to 219 residues: Octanoyltransferase (219 aa).

One can recognise a BPL/LPL catalytic domain in the interval 32-207; that stretch reads ENSQDEIWIV…TLSQELGLDK (176 aa). Residues 71 to 78, 138 to 140, and 151 to 153 contribute to the substrate site; these read RGGQVTYH, SLG, and GLA. Cys169 functions as the Acyl-thioester intermediate in the catalytic mechanism.

It belongs to the LipB family.

The protein resides in the cytoplasm. The catalysed reaction is octanoyl-[ACP] + L-lysyl-[protein] = N(6)-octanoyl-L-lysyl-[protein] + holo-[ACP] + H(+). It participates in protein modification; protein lipoylation via endogenous pathway; protein N(6)-(lipoyl)lysine from octanoyl-[acyl-carrier-protein]: step 1/2. Functionally, catalyzes the transfer of endogenously produced octanoic acid from octanoyl-acyl-carrier-protein onto the lipoyl domains of lipoate-dependent enzymes. Lipoyl-ACP can also act as a substrate although octanoyl-ACP is likely to be the physiological substrate. In Shewanella halifaxensis (strain HAW-EB4), this protein is Octanoyltransferase.